The primary structure comprises 322 residues: ATP-dependent 6-phosphofructokinase (322 aa).

Residue glycine 12 coordinates ATP. 22-26 (RATAK) serves as a coordination point for ADP. ATP-binding positions include 73–74 (RS) and 103–106 (GDGS). Position 104 (aspartate 104) interacts with Mg(2+). 127–129 (TID) serves as a coordination point for substrate. Aspartate 129 serves as the catalytic Proton acceptor. Position 156 (arginine 156) interacts with ADP. Residues arginine 164 and 171–173 (MGR) each bind substrate. Residues 187–189 (GGD) and 215–217 (KLH) contribute to the ADP site. Residues glutamate 224, arginine 245, and 251–254 (HIQR) each bind substrate.

It belongs to the phosphofructokinase type A (PFKA) family. ATP-dependent PFK group I subfamily. Prokaryotic clade 'B1' sub-subfamily. Homotetramer. The cofactor is Mg(2+).

It is found in the cytoplasm. The catalysed reaction is beta-D-fructose 6-phosphate + ATP = beta-D-fructose 1,6-bisphosphate + ADP + H(+). The protein operates within carbohydrate degradation; glycolysis; D-glyceraldehyde 3-phosphate and glycerone phosphate from D-glucose: step 3/4. Its activity is regulated as follows. Allosterically activated by ADP and other diphosphonucleosides, and allosterically inhibited by phosphoenolpyruvate. Functionally, catalyzes the phosphorylation of D-fructose 6-phosphate to fructose 1,6-bisphosphate by ATP, the first committing step of glycolysis. This is ATP-dependent 6-phosphofructokinase from Fusobacterium nucleatum subsp. nucleatum (strain ATCC 25586 / DSM 15643 / BCRC 10681 / CIP 101130 / JCM 8532 / KCTC 2640 / LMG 13131 / VPI 4355).